The primary structure comprises 99 residues: MNPDNYLYLAALIFTIGAAGVMLRRNAIVVFMSVELMLNAANLAFVTFARMHGNLDGQVIAFFTMVVAATEVVVGLGIIMTIFRTRRSASVDDADVLKF.

Transmembrane regions (helical) follow at residues 3–23 (PDNY…GVML), 28–48 (IVVF…FVTF), and 59–79 (VIAF…LGII).

The protein belongs to the complex I subunit 4L family. In terms of assembly, NDH-1 is composed of 14 different subunits. Subunits NuoA, H, J, K, L, M, N constitute the membrane sector of the complex.

The protein resides in the cell membrane. It carries out the reaction a quinone + NADH + 5 H(+)(in) = a quinol + NAD(+) + 4 H(+)(out). NDH-1 shuttles electrons from NADH, via FMN and iron-sulfur (Fe-S) centers, to quinones in the respiratory chain. The immediate electron acceptor for the enzyme in this species is believed to be a menaquinone. Couples the redox reaction to proton translocation (for every two electrons transferred, four hydrogen ions are translocated across the cytoplasmic membrane), and thus conserves the redox energy in a proton gradient. This chain is NADH-quinone oxidoreductase subunit K, found in Mycobacteroides abscessus (strain ATCC 19977 / DSM 44196 / CCUG 20993 / CIP 104536 / JCM 13569 / NCTC 13031 / TMC 1543 / L948) (Mycobacterium abscessus).